The following is a 65-amino-acid chain: Antimicrobial peptide 1 (65 aa).

The signal sequence occupies residues 1–27 (MAKVSSAYLKFALVMILLLSVISAVMS). Intrachain disulfides connect C30–C47, C37–C51, and C46–C62.

This sequence belongs to the AMP family. Seed specific.

The protein localises to the secreted. In terms of biological role, possesses antifungal activity. The protein is Antimicrobial peptide 1 of Phytolacca americana (American pokeweed).